A 2359-amino-acid polypeptide reads, in one-letter code: Low-reducing polyketide synthase drtA (2359 aa).

The region spanning 17 to 444 (LPPIAVVSFA…GANAHVIVEE (428 aa)) is the Ketosynthase family 3 (KS3) domain. Active-site for beta-ketoacyl synthase activity residues include cysteine 190, histidine 327, and histidine 367. Positions 556–868 (VFTGQGSQWP…QYLAALDRGK (313 aa)) are malonyl-CoA:ACP transacylase (MAT) domain. Residue serine 648 is the For malonyltransferase activity of the active site. The N-terminal hotdog fold stretch occupies residues 940-1077 (HELLGRKILG…GRISVRQVAA (138 aa)). Residues 940–1245 (HELLGRKILG…FKGLRFSELN (306 aa)) are dehydratase (DH) domain. The 311-residue stretch at 940-1250 (HELLGRKILG…FSELNMGDGV (311 aa)) folds into the PKS/mFAS DH domain. Catalysis depends on histidine 972, which acts as the Proton acceptor; for dehydratase activity. The segment at 1089–1250 (AYSESAEHWY…FSELNMGDGV (162 aa)) is C-terminal hotdog fold. Aspartate 1153 functions as the Proton donor; for dehydratase activity in the catalytic mechanism. Positions 1659 to 1970 (GSFDSLELYE…TGRHVGKVVV (312 aa)) are enoyl reductase (ER) domain. Residues 1995 to 2172 (SYLITGGLHG…LSLDIGAVQD (178 aa)) form a ketoreductase (KR) domain region. The Carrier domain maps to 2280 to 2356 (ALTEAAIELF…ALCSKLITRL (77 aa)). Serine 2316 is modified (O-(pantetheine 4'-phosphoryl)serine).

The protein operates within secondary metabolite biosynthesis; terpenoid biosynthesis. Low-reducing polyketide synthase; part of the gene cluster that mediates the biosynthesis of various drimane-type sesquiterpene esters, compounds that exhibit diverse biological activities and are widely present in eukaryotes. The pathway begins with the synthesis of the backbone drimenol by the terpene cyclase drtB using farnesyl pyrophosphate (FPP) as substrate. The cytochrome P450 monooxygenase drtD is then responsible for the hydroxylations at C-6, C-9 and C-12, as well as the oxidation of hydroxyl groups at C-6 and C-11 to a ketone and an aldehyde, respectively. Then, the biosynthesis can go in two directions, either the hydroxylated drimenol is further hydroxylated at C-2 and C-3 by an enzyme(s) not associated with the drt cluster, or the FAD-binding oxidoreductase drtC further oxidizes C-11 or C-12 to form the butyrolactone ring. DrtB, drtD and drtC are solely responsible for the formation of the different drimane structures observed during drimane sesquiterpenes biosynthesis. The polyketide synthase drtA synthesizes different lengths (C6 and C8) of PKS chains, which are then oxidized to varying degrees by the short-chain dehydrogenase drtF. Finally, these PKS chains are transferred onto drimane sesquiterpenes by the acyltransferase drtE, forming the sesquiterpene esters. In addition to the different fatty acyl-CoA chains produced by drtA, drtE is also able to use cinnamoyl-CoA as a substrate. This chain is Low-reducing polyketide synthase drtA, found in Aspergillus calidoustus.